We begin with the raw amino-acid sequence, 117 residues long: Heat shock 70 kDa protein 1-like (117 aa).

ATP contacts are provided by residues Glu72–Lys75 and Gly84–Arg87.

The protein belongs to the heat shock protein 70 family. In terms of assembly, interacts with PRKN. In terms of tissue distribution, detected at higher levels in caput epididymal spermatazoa than in cauda epididymal spermatazoa (at protein level).

In terms of biological role, molecular chaperone implicated in a wide variety of cellular processes, including protection of the proteome from stress, folding and transport of newly synthesized polypeptides, activation of proteolysis of misfolded proteins and the formation and dissociation of protein complexes. Plays a pivotal role in the protein quality control system, ensuring the correct folding of proteins, the re-folding of misfolded proteins and controlling the targeting of proteins for subsequent degradation. This is achieved through cycles of ATP binding, ATP hydrolysis and ADP release, mediated by co-chaperones. The affinity for polypeptides is regulated by its nucleotide bound state. In the ATP-bound form, it has a low affinity for substrate proteins. However, upon hydrolysis of the ATP to ADP, it undergoes a conformational change that increases its affinity for substrate proteins. It goes through repeated cycles of ATP hydrolysis and nucleotide exchange, which permits cycles of substrate binding and release. Positive regulator of PRKN translocation to damaged mitochondria. The chain is Heat shock 70 kDa protein 1-like from Mesocricetus auratus (Golden hamster).